Here is a 110-residue protein sequence, read N- to C-terminus: Auxin-responsive protein SAUR71 (110 aa).

This sequence belongs to the ARG7 family. In terms of tissue distribution, highly expressed in the steles of roots and hypocotyls.

Its subcellular location is the cytoplasm. Plays a role in the regulation of cell expansion, root meristem patterning and auxin transport. The protein is Auxin-responsive protein SAUR71 of Arabidopsis thaliana (Mouse-ear cress).